Consider the following 119-residue polypeptide: Large ribosomal subunit protein bL20 (119 aa).

It belongs to the bacterial ribosomal protein bL20 family.

Binds directly to 23S ribosomal RNA and is necessary for the in vitro assembly process of the 50S ribosomal subunit. It is not involved in the protein synthesizing functions of that subunit. The sequence is that of Large ribosomal subunit protein bL20 from Alkaliphilus metalliredigens (strain QYMF).